The sequence spans 256 residues: ATP synthase subunit a (256 aa).

6 helical membrane-spanning segments follow: residues 33-53, 92-112, 122-142, 148-168, 191-211, and 235-255; these read ITTFTVYSVFILIVILGLTLL, YFPLIYTFFIFIFTANLIGMI, MVFIISLSVVIWLGVTIIGLY, FFALFVPAGCPLALAPLLVLI, GHLLMVILGGLVFNLMSVSIV, and MIQSYVFAILASGYIKDGLYL.

Belongs to the ATPase A chain family. In terms of assembly, F-type ATPases have 2 components, CF(1) - the catalytic core - and CF(0) - the membrane proton channel. CF(1) has five subunits: alpha(3), beta(3), gamma(1), delta(1), epsilon(1). CF(0) has three main subunits: a, b and c.

It localises to the mitochondrion inner membrane. Mitochondrial membrane ATP synthase (F(1)F(0) ATP synthase or Complex V) produces ATP from ADP in the presence of a proton gradient across the membrane which is generated by electron transport complexes of the respiratory chain. F-type ATPases consist of two structural domains, F(1) - containing the extramembraneous catalytic core and F(0) - containing the membrane proton channel, linked together by a central stalk and a peripheral stalk. During catalysis, ATP synthesis in the catalytic domain of F(1) is coupled via a rotary mechanism of the central stalk subunits to proton translocation. Key component of the proton channel; it may play a direct role in the translocation of protons across the membrane. The polypeptide is ATP synthase subunit a (ATP6) (Wickerhamomyces canadensis (Yeast)).